Reading from the N-terminus, the 384-residue chain is N-acetyldiaminopimelate deacetylase (384 aa).

The active site involves Asp75. Glu134 (proton acceptor) is an active-site residue.

It belongs to the peptidase M20A family. N-acetyldiaminopimelate deacetylase subfamily.

The enzyme catalyses N-acetyl-(2S,6S)-2,6-diaminopimelate + H2O = (2S,6S)-2,6-diaminopimelate + acetate. It functions in the pathway amino-acid biosynthesis; L-lysine biosynthesis via DAP pathway; LL-2,6-diaminopimelate from (S)-tetrahydrodipicolinate (acetylase route): step 3/3. In terms of biological role, catalyzes the conversion of N-acetyl-diaminopimelate to diaminopimelate and acetate. This is N-acetyldiaminopimelate deacetylase from Lactobacillus helveticus (strain DPC 4571).